An 88-amino-acid polypeptide reads, in one-letter code: Small ribosomal subunit protein bS16 (88 aa).

Belongs to the bacterial ribosomal protein bS16 family.

This Mycoplasma pneumoniae (strain ATCC 29342 / M129 / Subtype 1) (Mycoplasmoides pneumoniae) protein is Small ribosomal subunit protein bS16.